The primary structure comprises 240 residues: Ribosomal RNA small subunit methyltransferase G (240 aa).

S-adenosyl-L-methionine is bound by residues Gly80, Phe85, 103-105, 131-132, and Arg150; these read DSS and AE.

The protein belongs to the methyltransferase superfamily. RNA methyltransferase RsmG family.

Its subcellular location is the cytoplasm. Its function is as follows. Specifically methylates the N7 position of a guanine in 16S rRNA. The sequence is that of Ribosomal RNA small subunit methyltransferase G from Thermoanaerobacter pseudethanolicus (strain ATCC 33223 / 39E) (Clostridium thermohydrosulfuricum).